Consider the following 394-residue polypeptide: RILP-like protein 1 (394 aa).

Positions 2-89 constitute an RH1 domain; the sequence is EGISALEKNV…RLERMDRIEK (88 aa). Residues 68-312 are a coiled coil; it reads EMEELRLELD…KVFMLQEELA (245 aa). Positions 282–347 constitute an RH2 domain; sequence RPRFTLQELR…IPQESGIKRL (66 aa). The tract at residues 318–337 is disordered; that stretch reads EADEEHKLPQSSPVIDSKAP.

This sequence belongs to the RILPL family.

It is found in the cytoplasm. Its subcellular location is the cytosol. The protein resides in the cytoskeleton. It localises to the microtubule organizing center. The protein localises to the centrosome. It is found in the cell projection. Its subcellular location is the cilium. Its function is as follows. Plays a role in the regulation of cell shape and polarity. Plays a role in cellular protein transport, including protein transport away from primary cilia. Neuroprotective protein. The polypeptide is RILP-like protein 1 (rilpl1) (Xenopus tropicalis (Western clawed frog)).